Reading from the N-terminus, the 630-residue chain is tRNA uridine 5-carboxymethylaminomethyl modification enzyme MnmG (630 aa).

Residue 13–18 (GGGHAG) participates in FAD binding. NAD(+) is bound at residue 273–287 (GPRYCPSIEDKIHRF).

This sequence belongs to the MnmG family. As to quaternary structure, homodimer. Heterotetramer of two MnmE and two MnmG subunits. FAD serves as cofactor.

It is found in the cytoplasm. Functionally, NAD-binding protein involved in the addition of a carboxymethylaminomethyl (cmnm) group at the wobble position (U34) of certain tRNAs, forming tRNA-cmnm(5)s(2)U34. This is tRNA uridine 5-carboxymethylaminomethyl modification enzyme MnmG from Pseudomonas entomophila (strain L48).